A 426-amino-acid chain; its full sequence is Dihydrofolate synthase/folylpolyglutamate synthase (426 aa).

Residue Gly58–Ser61 coordinates ATP. Ser82 is a binding site for Mg(2+). Thr121–Glu124 is a 7,8-dihydropteroate binding site. Glu145 contacts Mg(2+). Leu152–Ala154 provides a ligand contact to 7,8-dihydropteroate. Position 172 (His172) interacts with Mg(2+). ATP is bound by residues Arg289 and Asp302.

Belongs to the folylpolyglutamate synthase family. As to quaternary structure, monomer. Mg(2+) is required as a cofactor.

The enzyme catalyses 7,8-dihydropteroate + L-glutamate + ATP = 7,8-dihydrofolate + ADP + phosphate + H(+). The catalysed reaction is (6S)-5,6,7,8-tetrahydrofolyl-(gamma-L-Glu)(n) + L-glutamate + ATP = (6S)-5,6,7,8-tetrahydrofolyl-(gamma-L-Glu)(n+1) + ADP + phosphate + H(+). It carries out the reaction 10-formyltetrahydrofolyl-(gamma-L-Glu)(n) + L-glutamate + ATP = 10-formyltetrahydrofolyl-(gamma-L-Glu)(n+1) + ADP + phosphate + H(+). It catalyses the reaction (6R)-5,10-methylenetetrahydrofolyl-(gamma-L-Glu)(n) + L-glutamate + ATP = (6R)-5,10-methylenetetrahydrofolyl-(gamma-L-Glu)(n+1) + ADP + phosphate + H(+). The protein operates within cofactor biosynthesis; tetrahydrofolate biosynthesis; 7,8-dihydrofolate from 2-amino-4-hydroxy-6-hydroxymethyl-7,8-dihydropteridine diphosphate and 4-aminobenzoate: step 2/2. It functions in the pathway cofactor biosynthesis; tetrahydrofolylpolyglutamate biosynthesis. Its function is as follows. Functions in two distinct reactions of the de novo folate biosynthetic pathway. Catalyzes the addition of a glutamate residue to dihydropteroate (7,8-dihydropteroate or H2Pte) to form dihydrofolate (7,8-dihydrofolate monoglutamate or H2Pte-Glu). Also catalyzes successive additions of L-glutamate to tetrahydrofolate or 10-formyltetrahydrofolate or 5,10-methylenetetrahydrofolate, leading to folylpolyglutamate derivatives. The protein is Dihydrofolate synthase/folylpolyglutamate synthase (folC) of Buchnera aphidicola subsp. Baizongia pistaciae (strain Bp).